Here is a 107-residue protein sequence, read N- to C-terminus: uncharacterized protein (107 aa).

This is an uncharacterized protein from Microplitis demolitor (Parasitoid wasp).